The chain runs to 386 residues: 3-ketosteroid-9-alpha-monooxygenase, oxygenase component (386 aa).

The 103-residue stretch at 26–128 (WHCLGVAKDY…TDVRSGLLFV (103 aa)) folds into the Rieske domain. The [2Fe-2S] cluster site is built by Cys-67, His-69, Cys-86, and His-89. Fe cation is bound by residues Asn-175, His-181, His-186, and Asp-304.

In terms of assembly, homotrimer. The two-component system 3-ketosteroid-9-alpha-monooxygenase is composed of an oxygenase component KshA and a reductase component KshB. [2Fe-2S] cluster serves as cofactor. It depends on Fe cation as a cofactor.

It carries out the reaction androsta-1,4-diene-3,17-dione + 2 reduced [2Fe-2S]-[ferredoxin] + O2 + 2 H(+) = 9alpha-hydroxyandrosta-1,4-diene-3,17-dione + 2 oxidized [2Fe-2S]-[ferredoxin] + H2O. The enzyme catalyses androst-4-ene-3,17-dione + NADH + O2 + H(+) = 9alpha-hydroxy-androst-4-ene-3,17-dione + NAD(+) + H2O. The catalysed reaction is 3-oxochol-4-en-22-oate + NADH + O2 + H(+) = 9alpha-hydroxy-3-oxochol-4-en-22-oate + NAD(+) + H2O. It catalyses the reaction 3-oxochola-1,4-dien-22-oate + NADH + O2 + H(+) = 9alpha-hydroxy-3-oxochola-1,4-dien-22-oate + NAD(+) + H2O. It carries out the reaction 3-oxochol-4-en-22-oyl-CoA + NADH + O2 + H(+) = 9alpha-hydroxy-3-oxochol-4-en-22-oyl-CoA + NAD(+) + H2O. The enzyme catalyses 3-oxochola-1,4-dien-22-oyl-CoA + NADH + O2 + H(+) = 9alpha-hydroxy-3-oxochola-1,4-dien-22-oyl-CoA + NAD(+) + H2O. The protein operates within lipid metabolism; steroid biosynthesis. Involved in the degradation of cholesterol. Catalyzes the introduction of a 9a-hydroxyl moiety into 1,4-androstadiene-3,17-dione (ADD) to yield the 9alpha-hydroxy-1,4-androstadiene-3,17-dione (9OHADD) intermediate which spontaneously form 3-hydroxy-9,10-seconandrost-1,3,5(10)-triene-9,17-dione (HSA) via the meta-cleavage of ring B with concomitant aromatization of ring A. KSH is also able to use 4-androstene-3,17-dione (AD), 3-oxo-23,24-bisnorcholesta-4-en-22-oate (4-BNC), 3-oxo-23,24-bisnorcholesta-1,4-dien-22-oate (1,4-BNC), 3-oxo-23,24-bisnorcholesta-4-en-22-oyl-coenzyme A thioester (4-BNC-CoA) and 3-oxo-23,24-bisnorcholesta-1,4-dien-22-oyl-coenzyme A thioester (1,4-BNC-CoA) as substrates. This Mycobacterium tuberculosis (strain ATCC 25618 / H37Rv) protein is 3-ketosteroid-9-alpha-monooxygenase, oxygenase component (kshA).